A 192-amino-acid chain; its full sequence is Ion-translocating oxidoreductase complex subunit B (192 aa).

Positions 1-26 are hydrophobic; it reads MNAIWIAVAAVSLLALAFGAILGYAS. Residues 32–91 enclose the 4Fe-4S domain; the sequence is EDDPVVEKIDEILPQSQCGQCGYPGCRPYAEAISCNGEKINRCAPGGEAVMLKIAELLNV. [4Fe-4S] cluster contacts are provided by Cys49, Cys52, Cys57, Cys74, Cys117, Cys120, Cys123, Cys127, Cys147, Cys150, Cys153, and Cys157. 4Fe-4S ferredoxin-type domains follow at residues 108–137 and 138–167; these read MVAV…GATR and AMHT…LQPV.

The protein belongs to the 4Fe4S bacterial-type ferredoxin family. RnfB subfamily. As to quaternary structure, the complex is composed of six subunits: RsxA, RsxB, RsxC, RsxD, RsxE and RsxG. [4Fe-4S] cluster serves as cofactor.

Its subcellular location is the cell inner membrane. In terms of biological role, part of a membrane-bound complex that couples electron transfer with translocation of ions across the membrane. Required to maintain the reduced state of SoxR. In Escherichia coli O81 (strain ED1a), this protein is Ion-translocating oxidoreductase complex subunit B.